The sequence spans 971 residues: Breast cancer type 2 susceptibility protein homolog (971 aa).

Positions 1 to 15 are enriched in polar residues; the sequence is MDQNGASGSHPNRLS. Disordered regions lie at residues 1-30, 130-155, 349-395, and 420-466; these read MDQN…ATVS, SRKR…LSVQ, KLKL…DQPN, and MQCS…SSHQ. A compositionally biased stretch (basic residues) spans 130–139; that stretch reads SRKRDPKSHK. Positions 349 to 364 are enriched in basic and acidic residues; that stretch reads KLKLEPSSQKEQKSSK. 3 stretches are compositionally biased toward polar residues: residues 375–392, 420–432, and 453–466; these read SKQS…TILD, MQCS…SKNA, and KQTP…SSHQ. BRCA2 repeat units lie at residues 570–604, 671–705, and 746–780; these read AEPE…EFQS, NESQ…QSKA, and SETE…EFQA. The disordered stretch occupies residues 916–971; that stretch reads MERFAPKPSSTSTPLADRDLNRSKDCTKNRQDAEDMSPICMQPKKSRRLGLSRSRY. A compositionally biased stretch (basic and acidic residues) spans 931–948; sequence ADRDLNRSKDCTKNRQDA. Positions 959-971 are enriched in basic residues; sequence KKSRRLGLSRSRY.

In terms of assembly, interacts with Rad9. Interacts with spn-A/Rad51. Interacts with cyclin CycG.

It localises to the nucleus. In terms of biological role, involved in and required for double-strand break repair by meiotic and mitotic homologous recombination. During meiosis, has a dual role in the repair of meiotic double-stranded breaks and the efficient activation of the meiotic recombination checkpoint. The sequence is that of Breast cancer type 2 susceptibility protein homolog from Drosophila melanogaster (Fruit fly).